The primary structure comprises 341 residues: Methionine import ATP-binding protein MetN (341 aa).

The 236-residue stretch at 2-237 (IELCGLKKSF…PESLARKMLY (236 aa)) folds into the ABC transporter domain. 34 to 41 (GKSGAGKS) is a binding site for ATP.

Belongs to the ABC transporter superfamily. Methionine importer (TC 3.A.1.24) family. As to quaternary structure, the complex is composed of two ATP-binding proteins (MetN), two transmembrane proteins (MetI) and a solute-binding protein (MetQ).

It localises to the cell inner membrane. It carries out the reaction L-methionine(out) + ATP + H2O = L-methionine(in) + ADP + phosphate + H(+). It catalyses the reaction D-methionine(out) + ATP + H2O = D-methionine(in) + ADP + phosphate + H(+). Part of the ABC transporter complex MetNIQ involved in methionine import. Responsible for energy coupling to the transport system. This Legionella pneumophila (strain Lens) protein is Methionine import ATP-binding protein MetN.